A 287-amino-acid polypeptide reads, in one-letter code: Transcription initiation factor IIB 1 (287 aa).

The TFIIB-type zinc finger occupies 3 to 31 (HPHRCPECDGTIRETDTEHVCADCGLVVT). Zn(2+)-binding residues include C7, C10, C23, and C26. Over residues 40–53 (EWRTFSDDPDHAPE) the composition is skewed to basic and acidic residues. The disordered stretch occupies residues 40–63 (EWRTFSDDPDHAPERTGAPLTRSR). Tandem repeats lie at residues 111–194 (TEIR…NRDL) and 205–286 (EYLP…NLTD).

Belongs to the TFIIB family.

Its function is as follows. Stabilizes TBP binding to an archaeal box-A promoter. Also responsible for recruiting RNA polymerase II to the pre-initiation complex (DNA-TBP-TFIIB). The polypeptide is Transcription initiation factor IIB 1 (Halobacterium salinarum (strain ATCC 700922 / JCM 11081 / NRC-1) (Halobacterium halobium)).